The primary structure comprises 131 residues: Profilin-8 (131 aa).

Cys13 and Cys115 are joined by a disulfide. An Involved in PIP2 interaction motif is present at residues 81 to 97; the sequence is AVIRGKKGAGGITIKKT. Residue Thr111 is modified to Phosphothreonine.

The protein belongs to the profilin family. In terms of assembly, occurs in many kinds of cells as a complex with monomeric actin in a 1:1 ratio. In terms of processing, phosphorylated by MAP kinases.

The protein localises to the cytoplasm. It is found in the cytoskeleton. In terms of biological role, binds to actin and affects the structure of the cytoskeleton. At high concentrations, profilin prevents the polymerization of actin, whereas it enhances it at low concentrations. This Phleum pratense (Common timothy) protein is Profilin-8.